A 149-amino-acid chain; its full sequence is Probable microsomal glutathione S-transferase (149 aa).

2 helical membrane passes run 7–27 (SIFP…IGLW) and 123–143 (LSHI…GSSL).

Belongs to the MAPEG family.

Its subcellular location is the membrane. It carries out the reaction RX + glutathione = an S-substituted glutathione + a halide anion + H(+). In terms of biological role, may perform the conjugation of reduced glutathione to electrophiles. The polypeptide is Probable microsomal glutathione S-transferase (mgst) (Dictyostelium discoideum (Social amoeba)).